Consider the following 496-residue polypeptide: Beta-amylase (496 aa).

D54, H94, and D102 together coordinate substrate. E187 acts as the Proton donor in catalysis. K296, H301, and T343 together coordinate substrate. Residue E381 is the Proton acceptor of the active site. Residues 382–383 (NA) and R421 contribute to the substrate site. The tract at residues 455 to 496 (YNHGIPPLKRSGPKIPDDVLNEATKPIPPFPWDSETDMKVDG) is disordered.

The protein belongs to the glycosyl hydrolase 14 family.

It catalyses the reaction Hydrolysis of (1-&gt;4)-alpha-D-glucosidic linkages in polysaccharides so as to remove successive maltose units from the non-reducing ends of the chains.. This chain is Beta-amylase (BMY1), found in Medicago sativa (Alfalfa).